A 401-amino-acid chain; its full sequence is 8-amino-7-oxononanoate synthase (401 aa).

Arg19 lines the substrate pocket. 106 to 107 (GY) provides a ligand contact to pyridoxal 5'-phosphate. A substrate-binding site is contributed by His131. 3 residues coordinate pyridoxal 5'-phosphate: Ser176, His204, and Thr233. The residue at position 236 (Lys236) is an N6-(pyridoxal phosphate)lysine. Thr350 is a substrate binding site.

This sequence belongs to the class-II pyridoxal-phosphate-dependent aminotransferase family. BioF subfamily. In terms of assembly, homodimer. It depends on pyridoxal 5'-phosphate as a cofactor.

It carries out the reaction 6-carboxyhexanoyl-[ACP] + L-alanine + H(+) = (8S)-8-amino-7-oxononanoate + holo-[ACP] + CO2. It functions in the pathway cofactor biosynthesis; biotin biosynthesis. Its function is as follows. Catalyzes the decarboxylative condensation of pimeloyl-[acyl-carrier protein] and L-alanine to produce 8-amino-7-oxononanoate (AON), [acyl-carrier protein], and carbon dioxide. In Pseudomonas aeruginosa (strain ATCC 15692 / DSM 22644 / CIP 104116 / JCM 14847 / LMG 12228 / 1C / PRS 101 / PAO1), this protein is 8-amino-7-oxononanoate synthase.